The chain runs to 71 residues: General transcription factor IIH subunit 5 (71 aa).

Position 69 is a phosphothreonine (T69).

The protein belongs to the TFB5 family. In terms of assembly, component of the 7-subunit TFIIH core complex composed of XPB/ERCC3, XPD/ERCC2, GTF2H1, GTF2H2, GTF2H3, GTF2H4 and GTF2H5, which is active in NER. The core complex associates with the 3-subunit CDK-activating kinase (CAK) module composed of CCNH/cyclin H, CDK7 and MNAT1 to form the 10-subunit holoenzyme (holo-TFIIH) active in transcription. Part of TBP-based Pol II pre-initiation complex (PIC), in which Pol II core assembles with general transcription factors and other specific initiation factors including GTF2E1, GTF2E2, GTF2F1, GTF2F2, TCEA1, ERCC2, ERCC3, GTF2H2, GTF2H3, GTF2H4, GTF2H5, GTF2A1, GTF2A2, GTF2B and TBP; this large multi-subunit PIC complex mediates DNA unwinding and targets Pol II core to the transcription start site where the first phosphodiester bond forms.

It localises to the nucleus. The protein resides in the cytoplasm. Component of the general transcription and DNA repair factor IIH (TFIIH) core complex, which is involved in general and transcription-coupled nucleotide excision repair (NER) of damaged DNA and, when complexed to CAK, in RNA transcription by RNA polymerase II. In NER, TFIIH acts by opening DNA around the lesion to allow the excision of the damaged oligonucleotide and its replacement by a new DNA fragment. In transcription, TFIIH has an essential role in transcription initiation. When the pre-initiation complex (PIC) has been established, TFIIH is required for promoter opening and promoter escape. Phosphorylation of the C-terminal tail (CTD) of the largest subunit of RNA polymerase II by the kinase module CAK controls the initiation of transcription. Necessary for the stability of the TFIIH complex and for the presence of normal levels of TFIIH in the cell. The polypeptide is General transcription factor IIH subunit 5 (Homo sapiens (Human)).